A 154-amino-acid chain; its full sequence is Ribonuclease 8 (154 aa).

Residues 1–27 form the signal peptide; sequence MAPARAGCCPLLLLLLGLWVAQIPVSA. The active-site Proton acceptor is the H42. 2 disulfide bridges follow: C64–C118 and C89–C96. Substrate is bound by residues 65-69 and K90; that span reads KDLNT. The active-site Proton donor is the H149.

Belongs to the pancreatic ribonuclease family.

It localises to the secreted. Functionally, has a low ribonuclease activity. The sequence is that of Ribonuclease 8 (RNASE8) from Chlorocebus aethiops (Green monkey).